A 161-amino-acid polypeptide reads, in one-letter code: Ribosome maturation factor RimP (161 aa).

Belongs to the RimP family.

It is found in the cytoplasm. Functionally, required for maturation of 30S ribosomal subunits. This is Ribosome maturation factor RimP from Rickettsia felis (strain ATCC VR-1525 / URRWXCal2) (Rickettsia azadi).